The following is a 406-amino-acid chain: Interactor protein for cytohesin exchange factors 1 (406 aa).

Residues 13-112 (HADCQGWLYK…WLNKLGFAVT (100 aa)) form the PH domain. 3 disordered regions span residues 120 to 173 (DEEC…FSSL), 253 to 285 (SLNNNKDHLTVPDRAAGSRMADREEIKSSEDDE), and 383 to 406 (PQDPEVTPQEVMNPTSSDCVENSL). A compositionally biased stretch (acidic residues) spans 123-134 (CYSESEQEDPEV). Low complexity predominate over residues 144-153 (ASTTSSPVAA). Arginine 164 is subject to Phosphoserine. Over residues 272–285 (MADREEIKSSEDDE) the composition is skewed to basic and acidic residues. Residues 392 to 406 (EVMNPTSSDCVENSL) are compositionally biased toward polar residues.

In terms of assembly, interacts with guanine-nucleotide exchange factors PSCD1, PSCD2, PSCD3 and PSCD4.

Its subcellular location is the cytoplasm. It localises to the cell membrane. In terms of biological role, enhances the promotion of guanine-nucleotide exchange by PSCD2 on ARF6 in a concentration-dependent manner. This Mus musculus (Mouse) protein is Interactor protein for cytohesin exchange factors 1 (Ipcef1).